The primary structure comprises 309 residues: 4-hydroxy-3-methylbut-2-enyl diphosphate reductase (309 aa).

C12 contributes to the [4Fe-4S] cluster binding site. Positions 41 and 74 each coordinate (2E)-4-hydroxy-3-methylbut-2-enyl diphosphate. Dimethylallyl diphosphate-binding residues include H41 and H74. Residues H41 and H74 each contribute to the isopentenyl diphosphate site. C96 provides a ligand contact to [4Fe-4S] cluster. H124 is a (2E)-4-hydroxy-3-methylbut-2-enyl diphosphate binding site. H124 contacts dimethylallyl diphosphate. Residue H124 coordinates isopentenyl diphosphate. E126 acts as the Proton donor in catalysis. T167 provides a ligand contact to (2E)-4-hydroxy-3-methylbut-2-enyl diphosphate. Residue C197 coordinates [4Fe-4S] cluster. Positions 225, 226, 227, and 269 each coordinate (2E)-4-hydroxy-3-methylbut-2-enyl diphosphate. Dimethylallyl diphosphate contacts are provided by S225, S226, N227, and S269. Residues S225, S226, N227, and S269 each coordinate isopentenyl diphosphate.

It belongs to the IspH family. [4Fe-4S] cluster serves as cofactor.

The catalysed reaction is isopentenyl diphosphate + 2 oxidized [2Fe-2S]-[ferredoxin] + H2O = (2E)-4-hydroxy-3-methylbut-2-enyl diphosphate + 2 reduced [2Fe-2S]-[ferredoxin] + 2 H(+). It carries out the reaction dimethylallyl diphosphate + 2 oxidized [2Fe-2S]-[ferredoxin] + H2O = (2E)-4-hydroxy-3-methylbut-2-enyl diphosphate + 2 reduced [2Fe-2S]-[ferredoxin] + 2 H(+). It functions in the pathway isoprenoid biosynthesis; dimethylallyl diphosphate biosynthesis; dimethylallyl diphosphate from (2E)-4-hydroxy-3-methylbutenyl diphosphate: step 1/1. The protein operates within isoprenoid biosynthesis; isopentenyl diphosphate biosynthesis via DXP pathway; isopentenyl diphosphate from 1-deoxy-D-xylulose 5-phosphate: step 6/6. Functionally, catalyzes the conversion of 1-hydroxy-2-methyl-2-(E)-butenyl 4-diphosphate (HMBPP) into a mixture of isopentenyl diphosphate (IPP) and dimethylallyl diphosphate (DMAPP). Acts in the terminal step of the DOXP/MEP pathway for isoprenoid precursor biosynthesis. The polypeptide is 4-hydroxy-3-methylbut-2-enyl diphosphate reductase (Colwellia psychrerythraea (strain 34H / ATCC BAA-681) (Vibrio psychroerythus)).